The chain runs to 122 residues: Aspartate 1-decarboxylase (122 aa).

The Schiff-base intermediate with substrate; via pyruvic acid role is filled by S25. Residue S25 is modified to Pyruvic acid (Ser). T57 serves as a coordination point for substrate. Catalysis depends on Y58, which acts as the Proton donor. 73-75 contributes to the substrate binding site; sequence GAA.

This sequence belongs to the PanD family. In terms of assembly, heterooctamer of four alpha and four beta subunits. It depends on pyruvate as a cofactor. Post-translationally, is synthesized initially as an inactive proenzyme, which is activated by self-cleavage at a specific serine bond to produce a beta-subunit with a hydroxyl group at its C-terminus and an alpha-subunit with a pyruvoyl group at its N-terminus.

Its subcellular location is the cytoplasm. It carries out the reaction L-aspartate + H(+) = beta-alanine + CO2. It participates in cofactor biosynthesis; (R)-pantothenate biosynthesis; beta-alanine from L-aspartate: step 1/1. Functionally, catalyzes the pyruvoyl-dependent decarboxylation of aspartate to produce beta-alanine. The chain is Aspartate 1-decarboxylase from Bordetella pertussis (strain Tohama I / ATCC BAA-589 / NCTC 13251).